Here is a 378-residue protein sequence, read N- to C-terminus: Chorismate synthase (378 aa).

The tract at residues 42–61 is disordered; it reads IQAELDRRRPGQSPITTPRQ. Arg-49 is an NADP(+) binding site. Residues 126–128, Gly-287, 302–306, and Arg-328 each bind FMN; these read RAS and KPTAT.

It belongs to the chorismate synthase family. Homotetramer. Requires FMNH2 as cofactor.

The enzyme catalyses 5-O-(1-carboxyvinyl)-3-phosphoshikimate = chorismate + phosphate. The protein operates within metabolic intermediate biosynthesis; chorismate biosynthesis; chorismate from D-erythrose 4-phosphate and phosphoenolpyruvate: step 7/7. In terms of biological role, catalyzes the anti-1,4-elimination of the C-3 phosphate and the C-6 proR hydrogen from 5-enolpyruvylshikimate-3-phosphate (EPSP) to yield chorismate, which is the branch point compound that serves as the starting substrate for the three terminal pathways of aromatic amino acid biosynthesis. This reaction introduces a second double bond into the aromatic ring system. The sequence is that of Chorismate synthase from Synechococcus sp. (strain JA-2-3B'a(2-13)) (Cyanobacteria bacterium Yellowstone B-Prime).